Consider the following 566-residue polypeptide: Potassium-transporting ATPase potassium-binding subunit (566 aa).

Helical transmembrane passes span 6-26 (VALL…LGIA), 60-80 (AAAI…LMLF), 128-148 (LGLT…AFVL), 167-187 (IWRI…LFLA), 247-267 (LTNF…CICF), 276-296 (VGSA…LLIM), 331-351 (FGLW…CGAV), 361-381 (LGGL…GGVG), 383-403 (GWYG…LMIG), 423-443 (IGLL…VILP), 492-512 (LMFV…GALI), and 530-550 (LFVG…FIPA).

This sequence belongs to the KdpA family. The system is composed of three essential subunits: KdpA, KdpB and KdpC.

It localises to the cell inner membrane. Part of the high-affinity ATP-driven potassium transport (or Kdp) system, which catalyzes the hydrolysis of ATP coupled with the electrogenic transport of potassium into the cytoplasm. This subunit binds the periplasmic potassium ions and delivers the ions to the membrane domain of KdpB through an intramembrane tunnel. The protein is Potassium-transporting ATPase potassium-binding subunit of Tolumonas auensis (strain DSM 9187 / NBRC 110442 / TA 4).